A 504-amino-acid chain; its full sequence is Pyruvate kinase (504 aa).

Arg-53 contributes to the substrate binding site. K(+) is bound by residues Asn-55, Ser-57, Asp-88, and Thr-89. Asn-55–His-58 lines the ATP pocket. Residues Arg-95 and Lys-181 each contribute to the ATP site. Mg(2+) is bound at residue Glu-246. Gly-269, Asp-270, and Thr-302 together coordinate substrate. Asp-270 contacts Mg(2+).

It belongs to the pyruvate kinase family. Homotetramer. It depends on Mg(2+) as a cofactor. Requires K(+) as cofactor.

It catalyses the reaction pyruvate + ATP = phosphoenolpyruvate + ADP + H(+). It participates in carbohydrate degradation; glycolysis; pyruvate from D-glyceraldehyde 3-phosphate: step 5/5. This is Pyruvate kinase (PYK1) from Debaryomyces hansenii (strain ATCC 36239 / CBS 767 / BCRC 21394 / JCM 1990 / NBRC 0083 / IGC 2968) (Yeast).